Here is a 368-residue protein sequence, read N- to C-terminus: tRNA(Met) cytidine acetate ligase (368 aa).

Residues 7 to 20 (IAEF…HKYL), glycine 96, asparagine 152, and arginine 175 each bind ATP.

The protein belongs to the TmcAL family.

The protein localises to the cytoplasm. The catalysed reaction is cytidine(34) in elongator tRNA(Met) + acetate + ATP = N(4)-acetylcytidine(34) in elongator tRNA(Met) + AMP + diphosphate. In terms of biological role, catalyzes the formation of N(4)-acetylcytidine (ac(4)C) at the wobble position of elongator tRNA(Met), using acetate and ATP as substrates. First activates an acetate ion to form acetyladenylate (Ac-AMP) and then transfers the acetyl group to tRNA to form ac(4)C34. The protein is tRNA(Met) cytidine acetate ligase of Streptococcus pyogenes serotype M3 (strain SSI-1).